Reading from the N-terminus, the 162-residue chain is Caveolin-2 (162 aa).

The Cytoplasmic portion of the chain corresponds to 1–86; the sequence is MGLETEKADV…FEISKYVVYK (86 aa). Residue Y19 is modified to Phosphotyrosine; by SRC. Phosphoserine is present on residues S20 and S23. Y27 is modified (phosphotyrosine; by SRC). S36 carries the post-translational modification Phosphoserine. Residues 87–107 constitute an intramembrane region (helical); that stretch reads FLTVFLAIPLAFAAGILFATL. Residues 108–162 lie on the Cytoplasmic side of the membrane; the sequence is SCLHIWIIMPFVKTCLMVLPSVQTVWKTVTDVVIAPLCASVGRSFSSVSLQLSHD.

The protein belongs to the caveolin family. As to quaternary structure, monomer or homodimer. Interacts with CAV1; the interaction forms a stable heterooligomeric complex that is required for targeting to lipid rafts and for caveolae formation. Tyrosine phosphorylated forms do not form heterooligomers with the Tyr-19-phosphorylated form existing as a monomer or dimer, and the Tyr-27-form as a monomer only. Interacts (tyrosine phosphorylated form) with the SH2 domain-containing proteins, RASA1, NCK1 and SRC. Interacts (tyrosine phosphorylated form) with INSR, the interaction (Tyr-27-phosphorylated form) is increased on insulin stimulation. Interacts (Tyr-19 phosphorylated form) with MAPK1 (phosphorylated form); the interaction, promoted by insulin, leads to nuclear location and MAPK1 activation. Interacts with STAT3; the interaction is increased on insulin-induced tyrosine phosphorylation leading to STAT activation. Phosphorylated on serine and tyrosine residues. CAV1 promotes phosphorylation on Ser-23 which then targets the complex to the plasma membrane, lipid rafts and caveolae. Phosphorylation on Ser-36 appears to modulate mitosis in endothelial cells. Phosphorylation on both Tyr-19 and Tyr-27 is required for insulin-induced 'Ser-727' phosphorylation of STAT3 and its activation. Phosphorylation on Tyr-19 is required for insulin-induced phosphorylation of MAPK1 and DNA binding of STAT3. Tyrosine phosphorylation is induced by both EGF and insulin (By. similarity).

It is found in the nucleus. It localises to the cytoplasm. Its subcellular location is the golgi apparatus membrane. The protein resides in the cell membrane. The protein localises to the membrane. It is found in the caveola. In terms of biological role, may act as a scaffolding protein within caveolar membranes. Interacts directly with G-protein alpha subunits and can functionally regulate their activity. Acts as an accessory protein in conjunction with CAV1 in targeting to lipid rafts and driving caveolae formation. The Ser-36 phosphorylated form has a role in modulating mitosis in endothelial cells. Positive regulator of cellular mitogenesis of the MAPK signaling pathway. Required for the insulin-stimulated nuclear translocation and activation of MAPK1 and STAT3, and the subsequent regulation of cell cycle progression. In Loxodonta africana (African elephant), this protein is Caveolin-2 (CAV2).